The following is a 357-amino-acid chain: SrfA-induced gene J protein (357 aa).

Residues 1-29 (MGRVEDQIKDNYNSLSHEGERLNREAKIE) form a disordered region. A coiled-coil region spans residues 5–51 (EDQIKDNYNSLSHEGERLNREAKIESEKLKNNAKLDAKDMKKDIDES). Positions 17–29 (HEGERLNREAKIE) are enriched in basic and acidic residues. Asparagine 114, asparagine 157, and asparagine 172 each carry an N-linked (GlcNAc...) asparagine glycan. Coiled coils occupy residues 150-177 (KNFKRTANETQKDANRLTSDVKNESNKI) and 223-270 (DETK…DAIE). A helical transmembrane segment spans residues 290-307 (IWGSIGLIGGATATSYLF).

The protein localises to the membrane. This chain is SrfA-induced gene J protein (sigJ), found in Dictyostelium discoideum (Social amoeba).